The chain runs to 388 residues: Large ribosomal subunit protein uL3A (388 aa).

Basic and acidic residues predominate over residues 1–10; that stretch reads MSHCKFEQPR. Residues 1 to 34 are disordered; the sequence is MSHCKFEQPRHGSLGFLPRKRASRQRGKVKAFPK. Serine 13 is modified (phosphoserine). Residues 18 to 31 are compositionally biased toward basic residues; it reads PRKRASRQRGKVKA. Serine 65, serine 140, serine 143, serine 207, serine 295, and serine 355 each carry phosphoserine. Threonine 372 is subject to Phosphothreonine.

The protein belongs to the universal ribosomal protein uL3 family. Component of the large ribosomal subunit (LSU). Mature yeast ribosomes consist of a small (40S) and a large (60S) subunit. The 40S small subunit contains 1 molecule of ribosomal RNA (18S rRNA) and at least 33 different proteins. The large 60S subunit contains 3 rRNA molecules (25S, 5.8S and 5S rRNA) and at least 46 different proteins. uL3 forms together with ES39L one of the contact sites for the signal recognition particle that targets ribosomes to the endoplasmic reticulum membrane.

It is found in the cytoplasm. Functionally, component of the ribosome, a large ribonucleoprotein complex responsible for the synthesis of proteins in the cell. The small ribosomal subunit (SSU) binds messenger RNAs (mRNAs) and translates the encoded message by selecting cognate aminoacyl-transfer RNA (tRNA) molecules. The large subunit (LSU) contains the ribosomal catalytic site termed the peptidyl transferase center (PTC), which catalyzes the formation of peptide bonds, thereby polymerizing the amino acids delivered by tRNAs into a polypeptide chain. The nascent polypeptides leave the ribosome through a tunnel in the LSU and interact with protein factors that function in enzymatic processing, targeting, and the membrane insertion of nascent chains at the exit of the ribosomal tunnel. uL3 plays a role in coordinating processes of accommodating the aminoacyl-tRNA in the PTC. In Schizosaccharomyces pombe (strain 972 / ATCC 24843) (Fission yeast), this protein is Large ribosomal subunit protein uL3A (rpl301).